A 243-amino-acid chain; its full sequence is Mitochondrial import inner membrane translocase subunit TIM17-2 (243 aa).

4 helical membrane passes run 19-36 (IGGA…FHFI), 66-83 (FAVW…MVYL), 90-109 (WNSI…RQGA), and 115-137 (SAIF…NKVL). A run of 10 repeats spans residues 149 to 151 (GMQ), 152 to 154 (GMP), 155 to 157 (GMQ), 158 to 160 (GMQ), 161 to 163 (GMP), 164 to 166 (GMP), 167 to 169 (GMQ), 170 to 172 (GMP), 173 to 175 (GMQ), and 176 to 178 (GMQ). The segment at 149–178 (GMQGMPGMQGMQGMPGMPGMQGMPGMQGMQ) is 10 X approximate repeats GMQ/P. Over residues 166–183 (PGMQGMPGMQGMQMGQMQ) the composition is skewed to low complexity. A disordered region spans residues 166 to 243 (PGMQGMPGMQ…APPVPSFEFK (78 aa)). Over residues 184 to 198 (SQAQIRSESQNQNTA) the composition is skewed to polar residues. Over residues 211–228 (FDKKKEEVQPGSESKTEV) the composition is skewed to basic and acidic residues.

Belongs to the Tim17/Tim22/Tim23 family. Component of the TIM17:23 complex at least composed of TIM23, TIM17 and TIM50. The complex interacts with the TIM44 component of the PAM complex. Interacts with TIM23-2. As to expression, expressed in roots, flowers, leaves and young cotyledons.

It is found in the mitochondrion inner membrane. It localises to the mitochondrion outer membrane. Its function is as follows. Essential component of the TIM17:23 complex, a complex that mediates the translocation of transit peptide-containing proteins across the mitochondrial inner membrane. Links the inner and outer membranes. The sequence is that of Mitochondrial import inner membrane translocase subunit TIM17-2 (TIM17-2) from Arabidopsis thaliana (Mouse-ear cress).